Consider the following 525-residue polypeptide: GMP synthase [glutamine-hydrolyzing] (525 aa).

In terms of domain architecture, Glutamine amidotransferase type-1 spans 8 to 207 (KILILDFGSQ…ALDICQCEAN (200 aa)). The active-site Nucleophile is Cys85. Catalysis depends on residues His181 and Glu183. The 193-residue stretch at 208–400 (WKPSSIIEDA…LGLPYNMLYR (193 aa)) folds into the GMPS ATP-PPase domain. 235–241 (SGGVDSS) contributes to the ATP binding site.

As to quaternary structure, homodimer.

The catalysed reaction is XMP + L-glutamine + ATP + H2O = GMP + L-glutamate + AMP + diphosphate + 2 H(+). Its pathway is purine metabolism; GMP biosynthesis; GMP from XMP (L-Gln route): step 1/1. Catalyzes the synthesis of GMP from XMP. The chain is GMP synthase [glutamine-hydrolyzing] from Shewanella loihica (strain ATCC BAA-1088 / PV-4).